The primary structure comprises 104 residues: Small ribosomal subunit protein uS10 (104 aa).

It belongs to the universal ribosomal protein uS10 family. Part of the 30S ribosomal subunit.

In terms of biological role, involved in the binding of tRNA to the ribosomes. In Aquifex aeolicus (strain VF5), this protein is Small ribosomal subunit protein uS10.